We begin with the raw amino-acid sequence, 66 residues long: Toxin Cll1 (66 aa).

In terms of domain architecture, LCN-type CS-alpha/beta spans 1–66 (KEGYLVNKST…TYPLPNKSCS (66 aa)). Intrachain disulfides connect C12–C65, C16–C41, C25–C46, and C29–C48.

The protein belongs to the long (4 C-C) scorpion toxin superfamily. Sodium channel inhibitor family. Beta subfamily. As to expression, expressed by the venom gland.

Its subcellular location is the secreted. Functionally, beta toxin that binds site-4 of sodium channels (Nav) and reduces peak current (observed on Nav1.1/SCN1A, Nav1.2/SCN2A, Nav1.3/SCN3A, Nav1.4/SCN5A, Nav1.5/SCN4A, and Nav1.6/SCN8A (IC(50)=44.9 nM)), shifts the voltage of activation toward more negative potentials (observed on Nav1.6, Nav1.1 (weak), Nav1.2 (weak), and Nav1.7 (weak)), and induces resurgent currents at negative voltages following brief and strong depolarizations (observed on Nav1.6, Nav1.1 (weak), Nav1.2 (weak), and Nav1.4 (weak)). This toxin is only active on crustaceans. This is Toxin Cll1 from Centruroides limpidus (Mexican scorpion).